The sequence spans 831 residues: Periplasmic nitrate reductase (831 aa).

The tat-type signal signal peptide spans 1-35 (MTISDSRRTFLKASAAAATASAAGIPLANGTAAEA). The 4Fe-4S Mo/W bis-MGD-type domain occupies 42–98 (IRWDKAACRFCGTGCSVLVGTKEGRVVATQGDPDAPVNRGLNCIKGYFLSKIMYGED). [4Fe-4S] cluster-binding residues include C49, C52, C56, and C84. Mo-bis(molybdopterin guanine dinucleotide)-binding positions include K86, Q153, N178, C182, 215 to 222 (WGSNMAEM), 246 to 250 (STYEH), 265 to 267 (QTD), M375, Q379, N485, 511 to 512 (SD), K534, D561, and 721 to 730 (TGRVLEHWHS). W797 provides a ligand contact to substrate. Mo-bis(molybdopterin guanine dinucleotide) is bound by residues N805 and K822.

The protein belongs to the prokaryotic molybdopterin-containing oxidoreductase family. NasA/NapA/NarB subfamily. In terms of assembly, component of the periplasmic nitrate reductase NapAB complex composed of NapA and NapB. The cofactor is [4Fe-4S] cluster. It depends on Mo-bis(molybdopterin guanine dinucleotide) as a cofactor. Predicted to be exported by the Tat system. The position of the signal peptide cleavage has not been experimentally proven.

The protein localises to the periplasm. It catalyses the reaction 2 Fe(II)-[cytochrome] + nitrate + 2 H(+) = 2 Fe(III)-[cytochrome] + nitrite + H2O. In terms of biological role, catalytic subunit of the periplasmic nitrate reductase complex NapAB. Receives electrons from NapB and catalyzes the reduction of nitrate to nitrite. This is Periplasmic nitrate reductase from Dinoroseobacter shibae (strain DSM 16493 / NCIMB 14021 / DFL 12).